The sequence spans 315 residues: Mitochondrial glutamate carrier 2 (315 aa).

Solcar repeat units lie at residues 6 to 92 (LSIT…FRRL), 100 to 210 (RNLK…LNNL), and 219 to 308 (ASFA…GIGE). 3 helical membrane passes run 12–32 (LING…IDLA), 61–81 (FFGM…EKAI), and 106–126 (MLAG…MEML). The tract at residues 141–160 (QGSASAPSTSRSYTTGSAST) is disordered. Over residues 142–159 (GSASAPSTSRSYTTGSAS) the composition is skewed to polar residues. Ser145 is subject to Phosphoserine. Helical transmembrane passes span 185–205 (GLGA…PLFA), 225–245 (FVSG…LDVL), and 288–308 (ALVI…GIGE).

Belongs to the mitochondrial carrier (TC 2.A.29) family. In terms of tissue distribution, expressed in brain, to a lesser extent in testis, and poorly in all the other tissues.

It localises to the mitochondrion inner membrane. The catalysed reaction is L-glutamate(in) + H(+)(in) = L-glutamate(out) + H(+)(out). Functionally, responsible for the transport of glutamate from the cytosol into the mitochondrial matrix with the concomitant import of a proton (symport system). The sequence is that of Mitochondrial glutamate carrier 2 from Homo sapiens (Human).